The sequence spans 544 residues: CTP synthase (544 aa).

Positions M1 to L266 are amidoligase domain. S13 contributes to the CTP binding site. S13 lines the UTP pocket. Residues S14 to I19 and D71 contribute to the ATP site. D71 and E140 together coordinate Mg(2+). CTP contacts are provided by residues D147–E149, K187–Q192, and K223. UTP contacts are provided by residues K187–Q192 and K223. In terms of domain architecture, Glutamine amidotransferase type-1 spans T291 to A543. G354 provides a ligand contact to L-glutamine. The active-site Nucleophile; for glutamine hydrolysis is C381. Residues L382–Q385, E404, and R471 each bind L-glutamine. Residues H516 and E518 contribute to the active site.

Belongs to the CTP synthase family. As to quaternary structure, homotetramer.

The enzyme catalyses UTP + L-glutamine + ATP + H2O = CTP + L-glutamate + ADP + phosphate + 2 H(+). It carries out the reaction L-glutamine + H2O = L-glutamate + NH4(+). It catalyses the reaction UTP + NH4(+) + ATP = CTP + ADP + phosphate + 2 H(+). Its pathway is pyrimidine metabolism; CTP biosynthesis via de novo pathway; CTP from UDP: step 2/2. Allosterically activated by GTP, when glutamine is the substrate; GTP has no effect on the reaction when ammonia is the substrate. The allosteric effector GTP functions by stabilizing the protein conformation that binds the tetrahedral intermediate(s) formed during glutamine hydrolysis. Inhibited by the product CTP, via allosteric rather than competitive inhibition. Functionally, catalyzes the ATP-dependent amination of UTP to CTP with either L-glutamine or ammonia as the source of nitrogen. Regulates intracellular CTP levels through interactions with the four ribonucleotide triphosphates. This chain is CTP synthase, found in Psychrobacter cryohalolentis (strain ATCC BAA-1226 / DSM 17306 / VKM B-2378 / K5).